We begin with the raw amino-acid sequence, 61 residues long: Small ribosomal subunit protein bS21 (61 aa).

The protein belongs to the bacterial ribosomal protein bS21 family.

This is Small ribosomal subunit protein bS21 from Leuconostoc mesenteroides subsp. mesenteroides (strain ATCC 8293 / DSM 20343 / BCRC 11652 / CCM 1803 / JCM 6124 / NCDO 523 / NBRC 100496 / NCIMB 8023 / NCTC 12954 / NRRL B-1118 / 37Y).